Consider the following 937-residue polypeptide: DNA mismatch repair protein msh-2 (937 aa).

Position 659–666 (659–666 (GPNMGGKS)) interacts with ATP.

It belongs to the DNA mismatch repair MutS family. In terms of assembly, heterodimer of msh2 and msh6.

The protein resides in the nucleus. Functionally, involved in post-replicative DNA-mismatch repair. Binds to mismatch-containing DNA. This chain is DNA mismatch repair protein msh-2 (msh-2), found in Neurospora crassa (strain ATCC 24698 / 74-OR23-1A / CBS 708.71 / DSM 1257 / FGSC 987).